The chain runs to 870 residues: Disks large homolog 2 (870 aa).

2 S-palmitoyl cysteine lipidation sites follow: Cys5 and Cys7. Ser28 bears the Phosphoserine mark. Residue Tyr58 is modified to Phosphotyrosine. At Ser65 the chain carries Phosphoserine. PDZ domains follow at residues 98-184 (EITL…VRRR) and 193-279 (EIKL…VGKP). Residues Ser307, Ser328, Ser360, Ser365, Ser406, and Ser414 each carry the phosphoserine modification. A PDZ 3 domain is found at 421–501 (KVVLHKGSTG…QTVTIIAQYQ (81 aa)). Residue Tyr505 is modified to Phosphotyrosine. A phosphoserine mark is found at Ser528, Ser530, Ser553, Ser627, and Ser635. One can recognise an SH3 domain in the interval 536–606 (KRSLYVRAMF…PSKRRVERKE (71 aa)). One can recognise a Guanylate kinase-like domain in the interval 680-855 (TRPVIILGPM…IYNQCKLVIE (176 aa)). A phosphotyrosine mark is found at Tyr750 and Tyr755.

This sequence belongs to the MAGUK family. Interacts through its PDZ domains with NETO1. Interacts with NOS1/nNOS through second PDZ domain. Interacts with KCNJ2/Kir2.1 (via C-terminus) through one of its PDZ domains. Interacts with KCNJ4, Interacts with FRMPD4 (via C-terminus). Interacts with LRFN1, LRFN2 and LRFN4. Interacts with FASLG. Interacts with KCNJ4. Interacts with ADAM22. Interacts with DGKI (via PDZ-binding motif). In terms of processing, palmitoylation of isoform 1 is not required for targeting to postsynaptic density.

It is found in the cell membrane. It localises to the postsynaptic density. Its subcellular location is the synapse. The protein localises to the membrane. The protein resides in the cell projection. It is found in the axon. It localises to the perikaryon. In terms of biological role, required for perception of chronic pain through NMDA receptor signaling. Regulates surface expression of NMDA receptors in dorsal horn neurons of the spinal cord. Interacts with the cytoplasmic tail of NMDA receptor subunits as well as inward rectifying potassium channels. Involved in regulation of synaptic stability at cholinergic synapses. Part of the postsynaptic protein scaffold of excitatory synapses. The protein is Disks large homolog 2 (DLG2) of Homo sapiens (Human).